The following is a 193-amino-acid chain: Molybdenum cofactor guanylyltransferase (193 aa).

GTP-binding positions include 8–10 (LAG), K21, D67, and D98. D98 contributes to the Mg(2+) binding site.

This sequence belongs to the MobA family. As to quaternary structure, monomer. Mg(2+) serves as cofactor.

It localises to the cytoplasm. The enzyme catalyses Mo-molybdopterin + GTP + H(+) = Mo-molybdopterin guanine dinucleotide + diphosphate. Its function is as follows. Transfers a GMP moiety from GTP to Mo-molybdopterin (Mo-MPT) cofactor (Moco or molybdenum cofactor) to form Mo-molybdopterin guanine dinucleotide (Mo-MGD) cofactor. The protein is Molybdenum cofactor guanylyltransferase of Cereibacter sphaeroides (Rhodobacter sphaeroides).